The chain runs to 108 residues: Thaicobrin (108 aa).

One can recognise a B30.2/SPRY domain in the interval 1–108 (SPPGNWQKAD…IWQKGLWWLG (108 aa)).

This sequence belongs to the ohanin/vespryn family. In terms of tissue distribution, expressed by the venom gland.

Its subcellular location is the secreted. Its function is as follows. Neurotoxin that produces dose-dependent hypolocomotion and hyperalgesia in mice. May directly act on the central nervous system, as it is 6500-fold more potent when administered intracerebroventricularly than intraperitoneal. The chain is Thaicobrin from Naja kaouthia (Monocled cobra).